Here is a 982-residue protein sequence, read N- to C-terminus: Mitochondrial DNA mismatch repair protein mutS homolog (982 aa).

Residue 698–705 participates in ATP binding; sequence SVNGAGKS. Positions 905 to 951 constitute an HNH domain; that stretch reads CEICGAPADAVHHIKPKSEHKKLCNRKLNRRSNLVPVCSSCHLDIHR.

This sequence belongs to the DNA mismatch repair MutS family.

Its subcellular location is the mitochondrion. May be involved in DNA-mismatch repair. The chain is Mitochondrial DNA mismatch repair protein mutS homolog from Sarcophyton glaucum (Toadstool umbrella leather coral).